The chain runs to 395 residues: Phosphopentomutase (395 aa).

Mn(2+) is bound by residues aspartate 14, aspartate 286, histidine 291, aspartate 327, histidine 328, and histidine 339.

The protein belongs to the phosphopentomutase family. Requires Mn(2+) as cofactor.

It is found in the cytoplasm. The enzyme catalyses 2-deoxy-alpha-D-ribose 1-phosphate = 2-deoxy-D-ribose 5-phosphate. The catalysed reaction is alpha-D-ribose 1-phosphate = D-ribose 5-phosphate. It functions in the pathway carbohydrate degradation; 2-deoxy-D-ribose 1-phosphate degradation; D-glyceraldehyde 3-phosphate and acetaldehyde from 2-deoxy-alpha-D-ribose 1-phosphate: step 1/2. Functionally, isomerase that catalyzes the conversion of deoxy-ribose 1-phosphate (dRib-1-P) and ribose 1-phosphate (Rib-1-P) to deoxy-ribose 5-phosphate (dRib-5-P) and ribose 5-phosphate (Rib-5-P), respectively. The protein is Phosphopentomutase of Staphylococcus haemolyticus (strain JCSC1435).